The chain runs to 200 residues: MLAKKLVTAQKRGETRALCLGLGMVACSMMMYFFIGITIVPFYTKSVWTTETICKVLKANIKDKTHCTNSEGSEDEDIFHYPCLQVWVNLTASGQEVMLYHTEDTLERNPKCSYVPGNSENSKEVKARIETIASNFKKYQTFPCYYDPGGMQTNVILSRLYPPKGLLFTFLWPTLMFTGGCLIIVLVKISQYFSVLSARQ.

Residues 1 to 19 (MLAKKLVTAQKRGETRALC) lie on the Cytoplasmic side of the membrane. The chain crosses the membrane as a helical span at residues 20–40 (LGLGMVACSMMMYFFIGITIV). The Extracellular portion of the chain corresponds to 41-166 (PFYTKSVWTT…LSRLYPPKGL (126 aa)). Asn-89 is a glycosylation site (N-linked (GlcNAc...) asparagine). A helical membrane pass occupies residues 167-187 (LFTFLWPTLMFTGGCLIIVLV). At 188–200 (KISQYFSVLSARQ) the chain is on the cytoplasmic side.

The protein belongs to the KCNMB (TC 8.A.14.1) family. KCNMB1 subfamily. As to quaternary structure, probably interacts with KCNMA1 tetramer.

It localises to the membrane. Its function is as follows. Probable regulatory subunit of the calcium activated potassium KCNMA1 (maxiK) channel that modulates the calcium sensitivity and gating kinetics of KCNMA1, thereby contributing to KCNMA1 channel diversity. Increases the apparent Ca(2+)/voltage sensitivity of the KCNMA1 channel. In Coturnix japonica (Japanese quail), this protein is Putative calcium-activated potassium channel subunit beta (KCNMB1).